The following is a 433-amino-acid chain: Ribulose bisphosphate carboxylase/oxygenase activase, chloroplastic (433 aa).

The segment covering 1–20 has biased composition (polar residues); that stretch reads MAAAFSSTVGAPASTPTRSS. The N-terminal 53 residues, 1 to 53, are a transit peptide targeting the chloroplast; sequence MAAAFSSTVGAPASTPTRSSFLGKKLNKPQVSAAVTYHGKSSSSNSRFKAMAA. The disordered stretch occupies residues 1–60; it reads MAAAFSSTVGAPASTPTRSSFLGKKLNKPQVSAAVTYHGKSSSSNSRFKAMAAKEVDETK. An ATP-binding site is contributed by 161–168; that stretch reads GGKGQGKS.

Belongs to the RuBisCO activase family.

It is found in the plastid. It localises to the chloroplast stroma. Functionally, activation of RuBisCO (ribulose-1,5-bisphosphate carboxylase/oxygenase; EC 4.1.1.39) involves the ATP-dependent carboxylation of the epsilon-amino group of lysine leading to a carbamate structure. This is Ribulose bisphosphate carboxylase/oxygenase activase, chloroplastic (RCA1) from Zea mays (Maize).